We begin with the raw amino-acid sequence, 351 residues long: Photosystem II D2 protein (351 aa).

Residues 39–59 (TAYLAAGGWMTGTTFVTSWYT) form a helical membrane-spanning segment. Residue His116 participates in chlorophyll a binding. Residues 123 to 139 (GFCLRQFEIARLVGIRP) form a helical membrane-spanning segment. Residues Gln128 and Asn141 each coordinate pheophytin a. Residues 151–164 (VFVSVFLLYPLGQA) form a helical membrane-spanning segment. Residue His196 participates in chlorophyll a binding. A helical membrane pass occupies residues 206–226 (GALLCAIHGATVENTLFEDGD). The a plastoquinone site is built by His213 and Phe260. His213 is a Fe cation binding site. His267 contacts Fe cation. The helical transmembrane segment at 277–293 (GLWTSAIGIVGLALNLR) threads the bilayer.

This sequence belongs to the reaction center PufL/M/PsbA/D family. In terms of assembly, PSII is composed of 1 copy each of membrane proteins PsbA, PsbB, PsbC, PsbD, PsbE, PsbF, PsbH, PsbI, PsbJ, PsbK, PsbL, PsbM, PsbT, PsbX, PsbY, PsbZ, Psb30/Ycf12, at least 3 peripheral proteins of the oxygen-evolving complex and a large number of cofactors. It forms dimeric complexes. It depends on The D1/D2 heterodimer binds P680, chlorophylls that are the primary electron donor of PSII, and subsequent electron acceptors. It shares a non-heme iron and each subunit binds pheophytin, quinone, additional chlorophylls, carotenoids and lipids. There is also a Cl(-1) ion associated with D1 and D2, which is required for oxygen evolution. The PSII complex binds additional chlorophylls, carotenoids and specific lipids. as a cofactor.

The protein resides in the plastid. It localises to the chloroplast thylakoid membrane. The enzyme catalyses 2 a plastoquinone + 4 hnu + 2 H2O = 2 a plastoquinol + O2. Functionally, photosystem II (PSII) is a light-driven water:plastoquinone oxidoreductase that uses light energy to abstract electrons from H(2)O, generating O(2) and a proton gradient subsequently used for ATP formation. It consists of a core antenna complex that captures photons, and an electron transfer chain that converts photonic excitation into a charge separation. The D1/D2 (PsbA/PsbD) reaction center heterodimer binds P680, the primary electron donor of PSII as well as several subsequent electron acceptors. D2 is needed for assembly of a stable PSII complex. In Trieres chinensis (Marine centric diatom), this protein is Photosystem II D2 protein.